The following is a 170-amino-acid chain: Ribosome maturation factor RimM (170 aa).

The PRC barrel domain occupies 96 to 169 (EGEFYACDVE…VVQLATLEGL (74 aa)).

It belongs to the RimM family. In terms of assembly, binds ribosomal protein uS19.

Its subcellular location is the cytoplasm. Its function is as follows. An accessory protein needed during the final step in the assembly of 30S ribosomal subunit, possibly for assembly of the head region. Essential for efficient processing of 16S rRNA. May be needed both before and after RbfA during the maturation of 16S rRNA. It has affinity for free ribosomal 30S subunits but not for 70S ribosomes. The protein is Ribosome maturation factor RimM of Sorangium cellulosum (strain So ce56) (Polyangium cellulosum (strain So ce56)).